The primary structure comprises 38 residues: Potassium channel toxin alpha-KTx 2.10 (38 aa).

3 disulfides stabilise this stretch: C7-C29, C13-C34, and C17-C36.

In terms of tissue distribution, expressed by the venom gland.

It localises to the secreted. In terms of biological role, blocks human voltage-gated potassium (Kv) channel Kv1.2/KCNA2. Does not inhibit human Kv1.1/KCNA1 at 100nM concentration. The protein is Potassium channel toxin alpha-KTx 2.10 of Centruroides bonito (Scorpion).